The chain runs to 177 residues: Large ribosomal subunit protein uL6 (177 aa).

This sequence belongs to the universal ribosomal protein uL6 family. Part of the 50S ribosomal subunit.

Functionally, this protein binds to the 23S rRNA, and is important in its secondary structure. It is located near the subunit interface in the base of the L7/L12 stalk, and near the tRNA binding site of the peptidyltransferase center. The chain is Large ribosomal subunit protein uL6 from Rickettsia prowazekii (strain Madrid E).